We begin with the raw amino-acid sequence, 874 residues long: Cellulose synthase catalytic subunit [UDP-forming] (874 aa).

The next 4 membrane-spanning stretches (helical) occupy residues 30 to 50, 151 to 171, 173 to 193, and 230 to 250; these read SPFS…VFPL, ILGV…TQPF, PLSQ…VRRM, and LVCG…LVLG. The segment at 271–364 is catalytic subdomain A; it reads QWPTVDIFVP…FVAIFDCDHV (94 aa). The active site involves Asp-313. Substrate is bound by residues Asp-360 and Asp-362. Residues 441-501 form a catalytic subdomain B region; sequence KPLDEIGGIA…GQRIRWARGM (61 aa). Asp-457 is an active-site residue. A run of 5 helical transmembrane segments spans residues 525–545, 547–567, 592–612, 634–654, and 668–688; these read LNAM…TAPL, FLLL…LFVI, IYET…LINP, VISR…AAGV, and VIVS…AVAV. The PilZ domain occupies 694-790; the sequence is QVRRAHRVEI…QHIDFVQCTF (97 aa). The chain crosses the membrane as a helical span at residues 833 to 853; it reads SVKVIFRSLTALIAWIVSFIP.

Belongs to the glycosyltransferase 2 family. It depends on Mg(2+) as a cofactor.

It localises to the cell inner membrane. It catalyses the reaction [(1-&gt;4)-beta-D-glucosyl](n) + UDP-alpha-D-glucose = [(1-&gt;4)-beta-D-glucosyl](n+1) + UDP + H(+). The protein operates within glycan metabolism; bacterial cellulose biosynthesis. Activated by bis-(3'-5') cyclic diguanylic acid (c-di-GMP). Catalytic subunit of cellulose synthase. It polymerizes uridine 5'-diphosphate glucose to cellulose, which is produced as an extracellular component for mechanical and chemical protection at the onset of the stationary phase, when the cells exhibit multicellular behavior (rdar morphotype). Coexpression of cellulose and thin aggregative fimbriae leads to a hydrophobic network with tightly packed cells embedded in a highly inert matrix. The polypeptide is Cellulose synthase catalytic subunit [UDP-forming] (bcsA) (Salmonella typhi).